A 366-amino-acid chain; its full sequence is Beta sliding clamp (366 aa).

It belongs to the beta sliding clamp family. Forms a ring-shaped head-to-tail homodimer around DNA which binds and tethers DNA polymerases and other proteins to the DNA. The DNA replisome complex has a single clamp-loading complex (3 tau and 1 each of delta, delta', psi and chi subunits) which binds 3 Pol III cores (1 core on the leading strand and 2 on the lagging strand) each with a beta sliding clamp dimer. Additional proteins in the replisome are other copies of gamma, psi and chi, Ssb, DNA helicase and RNA primase.

The protein resides in the cytoplasm. In terms of biological role, confers DNA tethering and processivity to DNA polymerases and other proteins. Acts as a clamp, forming a ring around DNA (a reaction catalyzed by the clamp-loading complex) which diffuses in an ATP-independent manner freely and bidirectionally along dsDNA. Initially characterized for its ability to contact the catalytic subunit of DNA polymerase III (Pol III), a complex, multichain enzyme responsible for most of the replicative synthesis in bacteria; Pol III exhibits 3'-5' exonuclease proofreading activity. The beta chain is required for initiation of replication as well as for processivity of DNA replication. This chain is Beta sliding clamp (dnaN), found in Chlamydia muridarum (strain MoPn / Nigg).